We begin with the raw amino-acid sequence, 510 residues long: 2,3-bisphosphoglycerate-independent phosphoglycerate mutase (510 aa).

Mn(2+) is bound by residues Asp-13 and Ser-63. The Phosphoserine intermediate role is filled by Ser-63. Residues His-124, 154-155, Arg-186, Arg-192, 262-265, and Lys-334 each bind substrate; these read RD and RADR. 5 residues coordinate Mn(2+): Asp-401, His-405, Asp-442, His-443, and His-461.

Belongs to the BPG-independent phosphoglycerate mutase family. In terms of assembly, monomer. The cofactor is Mn(2+).

The catalysed reaction is (2R)-2-phosphoglycerate = (2R)-3-phosphoglycerate. It participates in carbohydrate degradation; glycolysis; pyruvate from D-glyceraldehyde 3-phosphate: step 3/5. Its function is as follows. Catalyzes the interconversion of 2-phosphoglycerate and 3-phosphoglycerate. The sequence is that of 2,3-bisphosphoglycerate-independent phosphoglycerate mutase from Vibrio vulnificus (strain YJ016).